An 802-amino-acid polypeptide reads, in one-letter code: Ent-copalyl diphosphate synthase, chloroplastic (802 aa).

The N-terminal 60 residues, 1–60 (MSLQYHVLNSIPSTTFLSSTKTTISSSFLTISGSPLNVARDKSRSGSIHCSKLRTQEYIN), are a transit peptide targeting the chloroplast. Position 245 (K245) interacts with substrate. Mg(2+)-binding residues include D377 and D379. Positions 377–380 (DIDD) match the DXDD motif motif. K463 contacts substrate.

Belongs to the terpene synthase family. Tpsc subfamily. Requires Mg(2+) as cofactor. In terms of processing, the N-terminus is blocked. In terms of tissue distribution, expressed in roots, leaves, flowers and also in siliques.

Its subcellular location is the plastid. It is found in the chloroplast. The catalysed reaction is (2E,6E,10E)-geranylgeranyl diphosphate = ent-copalyl diphosphate. The protein operates within plant hormone biosynthesis; gibberellin biosynthesis. Its activity is regulated as follows. Inhibited by high concentrations of magnesium. Its function is as follows. Catalyzes the conversion of geranylgeranyl diphosphate to the gibberellin precursor ent-copalyl diphosphate. In Arabidopsis thaliana (Mouse-ear cress), this protein is Ent-copalyl diphosphate synthase, chloroplastic (GA1).